The sequence spans 361 residues: Anthranilate phosphoribosyltransferase (361 aa).

5-phospho-alpha-D-ribose 1-diphosphate contacts are provided by residues G101, G104–D105, T109, N111–T114, K129–S137, and S141. G101 lines the anthranilate pocket. S113 serves as a coordination point for Mg(2+). Residue N132 coordinates anthranilate. R187 lines the anthranilate pocket. The Mg(2+) site is built by D245 and E246.

This sequence belongs to the anthranilate phosphoribosyltransferase family. As to quaternary structure, homodimer. It depends on Mg(2+) as a cofactor.

The enzyme catalyses N-(5-phospho-beta-D-ribosyl)anthranilate + diphosphate = 5-phospho-alpha-D-ribose 1-diphosphate + anthranilate. The protein operates within amino-acid biosynthesis; L-tryptophan biosynthesis; L-tryptophan from chorismate: step 2/5. Functionally, catalyzes the transfer of the phosphoribosyl group of 5-phosphorylribose-1-pyrophosphate (PRPP) to anthranilate to yield N-(5'-phosphoribosyl)-anthranilate (PRA). The chain is Anthranilate phosphoribosyltransferase from Shewanella denitrificans (strain OS217 / ATCC BAA-1090 / DSM 15013).